We begin with the raw amino-acid sequence, 102 residues long: Small ribosomal subunit protein uS10 (102 aa).

This sequence belongs to the universal ribosomal protein uS10 family. Part of the 30S ribosomal subunit.

Involved in the binding of tRNA to the ribosomes. This Methylorubrum populi (strain ATCC BAA-705 / NCIMB 13946 / BJ001) (Methylobacterium populi) protein is Small ribosomal subunit protein uS10.